The following is a 332-amino-acid chain: Potassium channel subfamily K member 17 (332 aa).

Residues 1-20 (MYRPRARAAPEGRVRGCAVP) lie on the Cytoplasmic side of the membrane. The chain crosses the membrane as a helical span at residues 21–43 (STVLLLLAYLAYLALGTGVFWTL). N-linked (GlcNAc...) asparagine glycosylation is found at N65 and N94. The pore-forming intramembrane region spans 106–124 (SFFFSVSTITTIGYGNLSP). Residues T116, I117, G118, and Y119 each coordinate K(+). The selectivity filter 1 stretch occupies residues 116 to 121 (TIGYGN). The helical transmembrane segment at 128–148 (AARLFCIFFALVGIPLNLVVL) threads the bilayer. The Cytoplasmic portion of the chain corresponds to 149–179 (NRLGHLMQQGVNHWASRLGGTWQDPDKARWL). Residues 180–200 (AGSGALLSGLLLFLLLPPLLF) traverse the membrane as a helical segment. The segment at residues 211-230 (GFYFAFITLSTVGFGDYVIG) is an intramembrane region (pore-forming). K(+) is bound by residues T221, V222, G223, and F224. The interval 221 to 226 (TVGFGD) is selectivity filter 2. Residues 244 to 264 (MVSLWILFGMAWLALIIKLIL) form a helical membrane-spanning segment. Topologically, residues 265-332 (SQLETPGRVC…AHAAGCGKDS (68 aa)) are cytoplasmic. Residues 287–312 (SQSWRQGPDREPESHSPQQGCYPEGP) form a disordered region.

The protein belongs to the two pore domain potassium channel (TC 1.A.1.8) family. As to quaternary structure, homodimer; disulfide-linked. Heterodimer with KCNK5 and KCNK16. In terms of tissue distribution, widely expressed. Highly expressed in aorta and coronary artery. Expressed in pancreas, in both endocrine (alpha, beta, gamma, delta, and epsilon) and exocrine (acinar and ductal) cells.

Its subcellular location is the cell membrane. The catalysed reaction is K(+)(in) = K(+)(out). It catalyses the reaction Rb(+)(in) = Rb(+)(out). It carries out the reaction Cs(+)(in) = Cs(+)(out). Inhibited by Ba(2+), quinidine, chloroform and halothane. Activated at alkaline pH. Activated by quinine and isoflurane. K(+) channel that conducts voltage-dependent outward rectifying currents upon membrane depolarization. Voltage sensing is coupled to K(+) electrochemical gradient in an 'ion flux gating' mode where outward but not inward ion flow opens the gate. Homo- and heterodimerizes to form functional channels with distinct regulatory and gating properties. Present in the cardiac conduction system where it may regulate action potential duration and beating frequency of cardiac myocytes. Permeable to other monovalent cations such as Rb(+) and Cs(+). The polypeptide is Potassium channel subfamily K member 17 (Homo sapiens (Human)).